We begin with the raw amino-acid sequence, 157 residues long: Transcriptional repressor NrdR (157 aa).

The interval 1–22 is disordered; sequence MRCPKCGATKSSVIDSRQAEEG. Residues 3–34 fold into a zinc finger; sequence CPKCGATKSSVIDSRQAEEGNTIRRRRECDEC. An ATP-cone domain is found at 49–139; sequence LVVVKKDGTR…VYRSFKDVSE (91 aa).

Belongs to the NrdR family. Requires Zn(2+) as cofactor.

Negatively regulates transcription of bacterial ribonucleotide reductase nrd genes and operons by binding to NrdR-boxes. This chain is Transcriptional repressor NrdR, found in Streptococcus pneumoniae (strain Hungary19A-6).